The chain runs to 174 residues: Gamma-crystallin C (174 aa).

2 Beta/gamma crystallin 'Greek key' domains span residues 2–40 (GKIT…RVDS) and 41–83 (GCWM…RLIP). An S-methylcysteine modification is found at Cys23. Residues 84–87 (HAGS) are connecting peptide. 2 Beta/gamma crystallin 'Greek key' domains span residues 88-128 (HRMR…QVLE) and 129-171 (GCWV…RRVV).

It belongs to the beta/gamma-crystallin family.

Its function is as follows. Crystallins are the dominant structural components of the vertebrate eye lens. This is Gamma-crystallin C (Crygc) from Mus musculus (Mouse).